Here is a 1409-residue protein sequence, read N- to C-terminus: DNA-directed RNA polymerase subunit beta' (1409 aa).

Zn(2+) contacts are provided by cysteine 70, cysteine 72, cysteine 85, and cysteine 88. Positions 460, 462, and 464 each coordinate Mg(2+). The Zn(2+) site is built by cysteine 822, cysteine 896, cysteine 903, and cysteine 906.

This sequence belongs to the RNA polymerase beta' chain family. As to quaternary structure, the RNAP catalytic core consists of 2 alpha, 1 beta, 1 beta' and 1 omega subunit. When a sigma factor is associated with the core the holoenzyme is formed, which can initiate transcription. The cofactor is Mg(2+). Requires Zn(2+) as cofactor.

The enzyme catalyses RNA(n) + a ribonucleoside 5'-triphosphate = RNA(n+1) + diphosphate. DNA-dependent RNA polymerase catalyzes the transcription of DNA into RNA using the four ribonucleoside triphosphates as substrates. This chain is DNA-directed RNA polymerase subunit beta', found in Methylobacillus flagellatus (strain ATCC 51484 / DSM 6875 / VKM B-1610 / KT).